Consider the following 379-residue polypeptide: Cytochrome b (379 aa).

A run of 4 helical transmembrane segments spans residues 33-53, 77-98, 113-133, and 178-198; these read FGSL…FLDM, WLIR…YLHI, WNIG…GYVL, and FFAF…VHLL. The heme b site is built by histidine 83 and histidine 97. Positions 182 and 196 each coordinate heme b. Histidine 201 lines the a ubiquinone pocket. 4 consecutive transmembrane segments (helical) span residues 226–246, 288–308, 320–340, and 347–367; these read TKDF…VPFF, LGGV…PHIQ, ISQF…WIGG, and FIII…VLMP.

Belongs to the cytochrome b family. The cytochrome bc1 complex contains 11 subunits: 3 respiratory subunits (MT-CYB, CYC1 and UQCRFS1), 2 core proteins (UQCRC1 and UQCRC2) and 6 low-molecular weight proteins (UQCRH/QCR6, UQCRB/QCR7, UQCRQ/QCR8, UQCR10/QCR9, UQCR11/QCR10 and a cleavage product of UQCRFS1). This cytochrome bc1 complex then forms a dimer. Heme b is required as a cofactor.

It localises to the mitochondrion inner membrane. Component of the ubiquinol-cytochrome c reductase complex (complex III or cytochrome b-c1 complex) that is part of the mitochondrial respiratory chain. The b-c1 complex mediates electron transfer from ubiquinol to cytochrome c. Contributes to the generation of a proton gradient across the mitochondrial membrane that is then used for ATP synthesis. In Dipodomys nelsoni (Nelson's kangaroo rat), this protein is Cytochrome b (MT-CYB).